A 484-amino-acid polypeptide reads, in one-letter code: Nuclear rim protein 1 (484 aa).

Ser3 is modified (phosphoserine). 2 consecutive transmembrane segments (helical) span residues 145–165 and 252–272; these read FTIFILLSLNLYVSCKFMFGY and TAIVFLSFSDVSFTSAIAIVF. The interval 416 to 457 is disordered; it reads SSNENLEKGGAYLPNQDQNRPSKSLSPLRKTPLSARQKRFEG. Ser417 carries the phosphoserine modification. The segment covering 430–440 has biased composition (polar residues); that stretch reads NQDQNRPSKSL. Ser474 is subject to Phosphoserine.

This sequence belongs to the NUR1 family. Interacts with CSM1.

It is found in the nucleus membrane. Member of a perinuclear network that controls recombination at multiple loci to maintain genome stability. Required for rDNA repeat stability. In Saccharomyces cerevisiae (strain ATCC 204508 / S288c) (Baker's yeast), this protein is Nuclear rim protein 1 (NUR1).